A 943-amino-acid polypeptide reads, in one-letter code: Translation initiation factor IF-2 (943 aa).

2 disordered regions span residues 96–229 (FIKR…ERRR) and 243–352 (AAPK…QRQQ). Residues 104–116 (DAPSDAAESAPSA) are compositionally biased toward low complexity. Basic and acidic residues-rich tracts occupy residues 120–163 (ELVR…EERA) and 171–229 (AEKK…ERRR). The span at 278 to 293 (ATGSGTGARAAAPSAP) shows a compositional bias: low complexity. Over residues 313–323 (TTKKKEIKTRG) the composition is skewed to basic and acidic residues. In terms of domain architecture, tr-type G spans 443-612 (SRAPVVTVMG…LLQAEVLELK (170 aa)). Residues 452-459 (GHVDHGKT) form a G1 region. Residue 452–459 (GHVDHGKT) coordinates GTP. Residues 477–481 (GITQH) form a G2 region. A G3 region spans residues 498-501 (DTPG). GTP contacts are provided by residues 498–502 (DTPGH) and 552–555 (TKAD). Residues 552-555 (TKAD) are G4. A G5 region spans residues 588 to 590 (SSK).

It belongs to the TRAFAC class translation factor GTPase superfamily. Classic translation factor GTPase family. IF-2 subfamily.

Its subcellular location is the cytoplasm. One of the essential components for the initiation of protein synthesis. Protects formylmethionyl-tRNA from spontaneous hydrolysis and promotes its binding to the 30S ribosomal subunits. Also involved in the hydrolysis of GTP during the formation of the 70S ribosomal complex. The chain is Translation initiation factor IF-2 from Acidovorax sp. (strain JS42).